The primary structure comprises 350 residues: Glycosyltransferase 8 domain-containing protein 2 (350 aa).

Over 1 to 6 (MALLRK) the chain is Cytoplasmic. The helical; Signal-anchor for type II membrane protein transmembrane segment at 7 to 24 (INQVLLFLLIVTLCGILY) threads the bilayer. Residues 25-349 (KKVHKGTMLR…AGIFKLHHPN (325 aa)) are Lumenal-facing. A glycan (N-linked (GlcNAc...) asparagine) is linked at Asn-234.

This sequence belongs to the glycosyltransferase 8 family.

Its subcellular location is the membrane. The sequence is that of Glycosyltransferase 8 domain-containing protein 2 (GLT8D2) from Bos taurus (Bovine).